The primary structure comprises 263 residues: Phosphonates import ATP-binding protein PhnC 1 (263 aa).

The ABC transporter domain maps to 3-248 (IQVENLWVAF…KEKELYFGEK (246 aa)). 37 to 44 (GPSGAGKS) provides a ligand contact to ATP.

This sequence belongs to the ABC transporter superfamily. Phosphonates importer (TC 3.A.1.9.1) family. In terms of assembly, the complex is composed of two ATP-binding proteins (PhnC), two transmembrane proteins (PhnE) and a solute-binding protein (PhnD).

It localises to the cell inner membrane. It catalyses the reaction phosphonate(out) + ATP + H2O = phosphonate(in) + ADP + phosphate + H(+). In terms of biological role, part of the ABC transporter complex PhnCDE involved in phosphonates import. Responsible for energy coupling to the transport system. The protein is Phosphonates import ATP-binding protein PhnC 1 of Synechococcus sp. (strain JA-2-3B'a(2-13)) (Cyanobacteria bacterium Yellowstone B-Prime).